An 86-amino-acid chain; its full sequence is Probable oxaloacetate decarboxylase gamma chain 1 (86 aa).

A helical transmembrane segment spans residues Ala-11–Val-33.

It belongs to the OadG family. As to quaternary structure, heterotrimer of an alpha, a beta and a gamma subunit. Requires Na(+) as cofactor.

It localises to the cell membrane. The catalysed reaction is oxaloacetate + 2 Na(+)(in) + H(+) = pyruvate + 2 Na(+)(out) + CO2. Catalyzes the decarboxylation of oxaloacetate coupled to Na(+) translocation. In Vibrio cholerae serotype O1 (strain ATCC 39315 / El Tor Inaba N16961), this protein is Probable oxaloacetate decarboxylase gamma chain 1 (oadG1).